We begin with the raw amino-acid sequence, 673 residues long: Armadillo repeat-containing protein 8 (673 aa).

At Ala2 the chain carries N-acetylalanine. ARM repeat units lie at residues 51 to 92, 95 to 134, 138 to 176, 178 to 217, 224 to 265, 269 to 309, 313 to 352, 374 to 413, 416 to 455, 458 to 497, 501 to 540, 543 to 585, 588 to 627, and 634 to 673; these read NKQK…SLAM, ENNV…TIFT, TPEE…HCCK, PDHQ…VLAF, MTLV…YMCR, IRTD…YLIE, ELQR…HDLK, DIRK…SLSR, QQLR…NLLL, SPSK…NMAF, QKIK…NLLS, PHID…NIAD, TAKD…NLIW, and QERQ…QYLA. A Phosphoserine modification is found at Ser337. A Phosphoserine modification is found at Ser512.

In terms of assembly, identified in the CTLH complex that contains GID4, RANBP9 and/or RANBP10, MKLN1, MAEA, RMND5A (or alternatively its paralog RMND5B), GID8, ARMC8, WDR26 and YPEL5. Within this complex, MAEA, RMND5A (or alternatively its paralog RMND5B), GID8, WDR26, and RANBP9 and/or RANBP10 form the catalytic core, while GID4, MKLN1, ARMC8 and YPEL5 have ancillary roles.

The protein localises to the nucleus. Its subcellular location is the cytoplasm. Its function is as follows. Component of the CTLH E3 ubiquitin-protein ligase complex that selectively accepts ubiquitin from UBE2H and mediates ubiquitination and subsequent proteasomal degradation of the transcription factor HBP1. The chain is Armadillo repeat-containing protein 8 (ARMC8) from Homo sapiens (Human).